Here is a 168-residue protein sequence, read N- to C-terminus: Pheromone-binding protein (168 aa).

Residues 1–26 (MNKTTTKMKVAVVAIVVYLAVGNVDS) form the signal peptide. Intrachain disulfides connect cysteine 45/cysteine 80, cysteine 76/cysteine 134, and cysteine 123/cysteine 143.

This sequence belongs to the PBP/GOBP family. In terms of assembly, homodimer. In terms of tissue distribution, antenna.

Functionally, this major soluble protein in olfactory sensilla of male moths might serve to solubilize the extremely hydrophobic pheromone molecules and to transport pheromone through the aqueous lymph to receptors located on olfactory cilia. PBP is also found in sensilla from female M.sexta antennae. This is Pheromone-binding protein from Manduca sexta (Tobacco hawkmoth).